Consider the following 132-residue polypeptide: MSKSLNIIWQYIRAFVLIYACLYAGIFLASLLPITIPGSIIGMLILFVLLALQILPAKWVNPGCYVLIRYMALLFVPIGVGVMQYFDLLRAQFGPVVVSCAISTLVVFVVVSWSSHLIHGERKVVGQKGTKK.

Transmembrane regions (helical) follow at residues 7–27 (IIWQ…AGIF), 31–51 (LLPI…VLLA), 63–83 (GCYV…VGVM), and 93–113 (FGPV…VVSW).

Belongs to the UPF0299 family.

Its subcellular location is the cell inner membrane. The protein is UPF0299 membrane protein YohJ of Salmonella agona (strain SL483).